Reading from the N-terminus, the 411-residue chain is Serine hydroxymethyltransferase (411 aa).

Residues Leu117 and 121 to 123 (GHL) contribute to the (6S)-5,6,7,8-tetrahydrofolate site. Position 226 is an N6-(pyridoxal phosphate)lysine (Lys226). (6S)-5,6,7,8-tetrahydrofolate contacts are provided by residues Glu241 and 349-351 (SPF).

The protein belongs to the SHMT family. Homodimer. The cofactor is pyridoxal 5'-phosphate.

It is found in the cytoplasm. The enzyme catalyses (6R)-5,10-methylene-5,6,7,8-tetrahydrofolate + glycine + H2O = (6S)-5,6,7,8-tetrahydrofolate + L-serine. The protein operates within one-carbon metabolism; tetrahydrofolate interconversion. Its pathway is amino-acid biosynthesis; glycine biosynthesis; glycine from L-serine: step 1/1. Catalyzes the reversible interconversion of serine and glycine with tetrahydrofolate (THF) serving as the one-carbon carrier. This reaction serves as the major source of one-carbon groups required for the biosynthesis of purines, thymidylate, methionine, and other important biomolecules. Also exhibits THF-independent aldolase activity toward beta-hydroxyamino acids, producing glycine and aldehydes, via a retro-aldol mechanism. This chain is Serine hydroxymethyltransferase, found in Macrococcus caseolyticus (strain JCSC5402) (Macrococcoides caseolyticum).